Reading from the N-terminus, the 62-residue chain is MEWKTCSFCEGTIEPGCGKKYVKKDGSVMHFCSSKCEKNFKLGRVGRKVKWTNTFKRINRGQ.

Zn(2+) is bound by residues C6, C9, C32, and C36. A C4-type zinc finger spans residues 6-36 (CSFCEGTIEPGCGKKYVKKDGSVMHFCSSKC).

The protein belongs to the eukaryotic ribosomal protein eL24 family. In terms of assembly, part of the 50S ribosomal subunit. Forms a cluster with proteins L3 and L14. It depends on Zn(2+) as a cofactor.

Functionally, binds to the 23S rRNA. The polypeptide is Large ribosomal subunit protein eL24 (Methanococcus maripaludis (strain C7 / ATCC BAA-1331)).